Reading from the N-terminus, the 373-residue chain is tRNA-specific 2-thiouridylase MnmA (373 aa).

Residues 12 to 19 and M38 each bind ATP; that span reads GMSGGVDS. Residues 98–100 form an interaction with target base in tRNA region; sequence NPD. The active-site Nucleophile is the C103. A disulfide bridge connects residues C103 and C200. Residue G127 participates in ATP binding. The tract at residues 150 to 152 is interaction with tRNA; the sequence is KDQ. Catalysis depends on C200, which acts as the Cysteine persulfide intermediate. Positions 312-313 are interaction with tRNA; it reads RY.

Belongs to the MnmA/TRMU family.

The protein resides in the cytoplasm. It carries out the reaction S-sulfanyl-L-cysteinyl-[protein] + uridine(34) in tRNA + AH2 + ATP = 2-thiouridine(34) in tRNA + L-cysteinyl-[protein] + A + AMP + diphosphate + H(+). In terms of biological role, catalyzes the 2-thiolation of uridine at the wobble position (U34) of tRNA, leading to the formation of s(2)U34. The polypeptide is tRNA-specific 2-thiouridylase MnmA (Streptococcus agalactiae serotype Ia (strain ATCC 27591 / A909 / CDC SS700)).